The chain runs to 284 residues: 3-methyl-2-oxobutanoate hydroxymethyltransferase 2 (284 aa).

Mg(2+) is bound by residues aspartate 49 and aspartate 88. 3-methyl-2-oxobutanoate is bound by residues 49 to 50, aspartate 88, and lysine 118; that span reads DS. Position 120 (glutamate 120) interacts with Mg(2+). Glutamate 187 functions as the Proton acceptor in the catalytic mechanism.

This sequence belongs to the PanB family. Homodecamer; pentamer of dimers. Requires Mg(2+) as cofactor.

Its subcellular location is the cytoplasm. It catalyses the reaction 3-methyl-2-oxobutanoate + (6R)-5,10-methylene-5,6,7,8-tetrahydrofolate + H2O = 2-dehydropantoate + (6S)-5,6,7,8-tetrahydrofolate. The protein operates within cofactor biosynthesis; (R)-pantothenate biosynthesis; (R)-pantoate from 3-methyl-2-oxobutanoate: step 1/2. Catalyzes the reversible reaction in which hydroxymethyl group from 5,10-methylenetetrahydrofolate is transferred onto alpha-ketoisovalerate to form ketopantoate. This is 3-methyl-2-oxobutanoate hydroxymethyltransferase 2 from Burkholderia cenocepacia (strain HI2424).